Reading from the N-terminus, the 402-residue chain is Phosphoglycerate kinase (402 aa).

Residues 21–23 (DLN), Arg-36, 59–62 (HLGR), Arg-114, and Arg-147 contribute to the substrate site. Residues Lys-202, Glu-329, and 355–358 (GGDT) contribute to the ATP site.

Belongs to the phosphoglycerate kinase family. In terms of assembly, monomer.

It localises to the cytoplasm. The catalysed reaction is (2R)-3-phosphoglycerate + ATP = (2R)-3-phospho-glyceroyl phosphate + ADP. It participates in carbohydrate degradation; glycolysis; pyruvate from D-glyceraldehyde 3-phosphate: step 2/5. This chain is Phosphoglycerate kinase, found in Psychrobacter sp. (strain PRwf-1).